Reading from the N-terminus, the 487-residue chain is Betaine aldehyde dehydrogenase 1 (487 aa).

3 residues coordinate K(+): Ser26, Ile27, and Asp93. Residue 150 to 152 (GAW) participates in NAD(+) binding. Lys162 serves as the catalytic Charge relay system. NAD(+) is bound by residues 176–179 (KPSE) and 229–232 (SVPT). Leu244 lines the K(+) pocket. Glu250 serves as the catalytic Proton acceptor. NAD(+) contacts are provided by Gly252, Cys284, and Glu384. The active-site Nucleophile is the Cys284. Cys284 bears the Cysteine sulfenic acid (-SOH) mark. K(+)-binding residues include Lys454 and Gly457. Glu461 serves as the catalytic Charge relay system.

Belongs to the aldehyde dehydrogenase family. Dimer of dimers. The cofactor is K(+).

It carries out the reaction betaine aldehyde + NAD(+) + H2O = glycine betaine + NADH + 2 H(+). Its pathway is amine and polyamine biosynthesis; betaine biosynthesis via choline pathway; betaine from betaine aldehyde: step 1/1. In terms of biological role, involved in the biosynthesis of the osmoprotectant glycine betaine. Catalyzes the irreversible oxidation of betaine aldehyde to the corresponding acid. In Rhizobium meliloti (strain 1021) (Ensifer meliloti), this protein is Betaine aldehyde dehydrogenase 1.